We begin with the raw amino-acid sequence, 212 residues long: Uridine kinase (212 aa).

13-20 contributes to the ATP binding site; the sequence is GGSGSGKT.

The protein belongs to the uridine kinase family.

Its subcellular location is the cytoplasm. It catalyses the reaction uridine + ATP = UMP + ADP + H(+). The catalysed reaction is cytidine + ATP = CMP + ADP + H(+). It participates in pyrimidine metabolism; CTP biosynthesis via salvage pathway; CTP from cytidine: step 1/3. The protein operates within pyrimidine metabolism; UMP biosynthesis via salvage pathway; UMP from uridine: step 1/1. In Bacillus thuringiensis (strain Al Hakam), this protein is Uridine kinase.